Reading from the N-terminus, the 318-residue chain is Acetyl-coenzyme A carboxylase carboxyl transferase subunit alpha (318 aa).

Positions 43-293 constitute a CoA carboxyltransferase C-terminal domain; that stretch reads RSQTALRDLY…GDGIAAALKS (251 aa).

Belongs to the AccA family. As to quaternary structure, acetyl-CoA carboxylase is a heterohexamer composed of biotin carboxyl carrier protein (AccB), biotin carboxylase (AccC) and two subunits each of ACCase subunit alpha (AccA) and ACCase subunit beta (AccD).

It localises to the cytoplasm. The enzyme catalyses N(6)-carboxybiotinyl-L-lysyl-[protein] + acetyl-CoA = N(6)-biotinyl-L-lysyl-[protein] + malonyl-CoA. It participates in lipid metabolism; malonyl-CoA biosynthesis; malonyl-CoA from acetyl-CoA: step 1/1. Its function is as follows. Component of the acetyl coenzyme A carboxylase (ACC) complex. First, biotin carboxylase catalyzes the carboxylation of biotin on its carrier protein (BCCP) and then the CO(2) group is transferred by the carboxyltransferase to acetyl-CoA to form malonyl-CoA. This is Acetyl-coenzyme A carboxylase carboxyl transferase subunit alpha from Bartonella bacilliformis (strain ATCC 35685 / KC583 / Herrer 020/F12,63).